The chain runs to 372 residues: Queuine tRNA-ribosyltransferase (372 aa).

D90 serves as the catalytic Proton acceptor. Residues 90–94 (DSGGF), D144, Q193, and G220 each bind substrate. Residues 251–257 (GVGTPED) form an RNA binding region. The active-site Nucleophile is the D270. The interval 275-279 (TRNAR) is RNA binding; important for wobble base 34 recognition. Zn(2+)-binding residues include C308, C310, C313, and H339.

Belongs to the queuine tRNA-ribosyltransferase family. Homodimer. Within each dimer, one monomer is responsible for RNA recognition and catalysis, while the other monomer binds to the replacement base PreQ1. Zn(2+) serves as cofactor.

It carries out the reaction 7-aminomethyl-7-carbaguanine + guanosine(34) in tRNA = 7-aminomethyl-7-carbaguanosine(34) in tRNA + guanine. It functions in the pathway tRNA modification; tRNA-queuosine biosynthesis. Catalyzes the base-exchange of a guanine (G) residue with the queuine precursor 7-aminomethyl-7-deazaguanine (PreQ1) at position 34 (anticodon wobble position) in tRNAs with GU(N) anticodons (tRNA-Asp, -Asn, -His and -Tyr). Catalysis occurs through a double-displacement mechanism. The nucleophile active site attacks the C1' of nucleotide 34 to detach the guanine base from the RNA, forming a covalent enzyme-RNA intermediate. The proton acceptor active site deprotonates the incoming PreQ1, allowing a nucleophilic attack on the C1' of the ribose to form the product. After dissociation, two additional enzymatic reactions on the tRNA convert PreQ1 to queuine (Q), resulting in the hypermodified nucleoside queuosine (7-(((4,5-cis-dihydroxy-2-cyclopenten-1-yl)amino)methyl)-7-deazaguanosine). The chain is Queuine tRNA-ribosyltransferase from Campylobacter hominis (strain ATCC BAA-381 / DSM 21671 / CCUG 45161 / LMG 19568 / NCTC 13146 / CH001A).